The sequence spans 106 residues: UPF0235 protein OCAR_4310/OCA5_c02140 (106 aa).

This sequence belongs to the UPF0235 family.

In Afipia carboxidovorans (strain ATCC 49405 / DSM 1227 / KCTC 32145 / OM5) (Oligotropha carboxidovorans), this protein is UPF0235 protein OCAR_4310/OCA5_c02140.